A 636-amino-acid chain; its full sequence is ATP-dependent DNA helicase YoaA (636 aa).

One can recognise a Helicase ATP-binding domain in the interval 10 to 272 (QLAKAIPGFK…KDTQQLQKCA (263 aa)). 45–52 (AGTGTGKT) is a binding site for ATP. Cys108, Cys168, Cys173, and Cys179 together coordinate [4Fe-4S] cluster. Residues 225-228 (DEAH) carry the DEAH box motif.

It belongs to the helicase family. DinG subfamily. Interacts with the DNA polymerase III subunit Chi (holC), probably as a 1:1 complex. It depends on [4Fe-4S] cluster as a cofactor. Mg(2+) is required as a cofactor.

It catalyses the reaction Couples ATP hydrolysis with the unwinding of duplex DNA at the replication fork by translocating in the 5'-3' direction. This creates two antiparallel DNA single strands (ssDNA). The leading ssDNA polymer is the template for DNA polymerase III holoenzyme which synthesizes a continuous strand.. The catalysed reaction is ATP + H2O = ADP + phosphate + H(+). Non-hydrolyzable ATP analogs ATP-gamma-S and adenylyl-imidodiphosphate (AMP-PNP) inhibit helicase activity. DNA-dependent ATPase and 5'-3' DNA helicase. Has single-stranded (ss)DNA-dependent ATPase activity and 5'-3' helicase activity on forked DNA; both activities were measure in a YoaA:HolC (chi) complex. Requires a 20-35 nucleotide (nt) 5'-ssDNA tail; dsDNA with a 20 nt gap is also unwound. Unwinds damaged 3' nascent ends (such as those terminated by 3' azidothymidine (AZT), 3' dideoxy-C or an abasic site on the translocating strand), to promote repair and AZT excision. Without HolC the protein has much lower activity which could be due to YoaA instability or helicase stimulation by HolC. Genetically identified as involved in the repair of replication forks and tolerance of the chain-terminating nucleoside analog AZT. May act in proofreading during nucleotide misincorporation, it appears to aid in the removal of potential A-to-T transversion mutations in ndk mutants. The protein is ATP-dependent DNA helicase YoaA (yoaA) of Escherichia coli (strain K12).